Reading from the N-terminus, the 158-residue chain is Phosphopantetheine adenylyltransferase (158 aa).

S9 is a binding site for substrate. ATP contacts are provided by residues 9–10 and H17; that span reads SF. Substrate contacts are provided by K41, V73, and K87. Residues 88–90, E98, and 122–128 each bind ATP; these read GLR and YSFVSSS.

The protein belongs to the bacterial CoaD family. In terms of assembly, homohexamer. It depends on Mg(2+) as a cofactor.

The protein localises to the cytoplasm. The catalysed reaction is (R)-4'-phosphopantetheine + ATP + H(+) = 3'-dephospho-CoA + diphosphate. It participates in cofactor biosynthesis; coenzyme A biosynthesis; CoA from (R)-pantothenate: step 4/5. Its function is as follows. Reversibly transfers an adenylyl group from ATP to 4'-phosphopantetheine, yielding dephospho-CoA (dPCoA) and pyrophosphate. This is Phosphopantetheine adenylyltransferase from Mycobacterium sp. (strain JLS).